A 65-amino-acid chain; its full sequence is Small ribosomal subunit protein uS10 (65 aa).

This sequence belongs to the universal ribosomal protein uS10 family. Part of the 30S ribosomal subunit.

Its function is as follows. Involved in the binding of tRNA to the ribosomes. The sequence is that of Small ribosomal subunit protein uS10 (rps10) from Desulfurococcus mucosus (Desulfurococcus mobilis).